Consider the following 305-residue polypeptide: Urease accessory protein UreD (305 aa).

Belongs to the UreD family. In terms of assembly, ureD, UreF and UreG form a complex that acts as a GTP-hydrolysis-dependent molecular chaperone, activating the urease apoprotein by helping to assemble the nickel containing metallocenter of UreC. The UreE protein probably delivers the nickel.

Its subcellular location is the cytoplasm. Functionally, required for maturation of urease via the functional incorporation of the urease nickel metallocenter. The sequence is that of Urease accessory protein UreD from Delftia acidovorans (strain DSM 14801 / SPH-1).